Here is a 94-residue protein sequence, read N- to C-terminus: C-C motif chemokine 17 (94 aa).

An N-terminal signal peptide occupies residues 1–23; the sequence is MAPLKMLALVILLLGASLQHIHA. Cystine bridges form between Cys-33-Cys-57 and Cys-34-Cys-73.

The protein belongs to the intercrine beta (chemokine CC) family.

The protein resides in the secreted. Its function is as follows. Chemokine, which displays chemotactic activity for T lymphocytes, preferentially Th2 cells, but not monocytes or granulocytes. Therefore plays an important role in a wide range of inflammatory and immunological processes. Acts by binding to CCR4 at T-cell surface. Mediates GM-CSF/CSF2-driven pain and inflammation. In the brain, required to maintain the typical, highly branched morphology of hippocampal microglia under homeostatic conditions. May be important for the appropriate adaptation of microglial morphology and synaptic plasticity to acute lipopolysaccharide (LPS)-induced neuroinflammation. Plays a role in wound healing, mainly by inducing fibroblast migration into the wound. The sequence is that of C-C motif chemokine 17 (CCL17) from Macaca mulatta (Rhesus macaque).